A 92-amino-acid polypeptide reads, in one-letter code: MKTLLLTLVVVTIVCLDLGYTRRCFITPDVRSERCPPGQEVCYTKTWCDGFCGSRGKRVDLGCAATCPTPKKKGIDIICCSKDNCNTFPKWP.

An N-terminal signal peptide occupies residues 1–21 (MKTLLLTLVVVTIVCLDLGYT). 5 disulfides stabilise this stretch: cysteine 24–cysteine 42, cysteine 35–cysteine 63, cysteine 48–cysteine 52, cysteine 67–cysteine 79, and cysteine 80–cysteine 85.

This sequence belongs to the three-finger toxin family. Long-chain subfamily. Type II alpha-neurotoxin sub-subfamily. As to expression, expressed by the venom gland.

It localises to the secreted. Functionally, binds with high affinity to muscular (alpha-1/CHRNA1) and neuronal (alpha-7/CHRNA7) nicotinic acetylcholine receptor (nAChR) and inhibits acetylcholine from binding to the receptor, thereby impairing neuromuscular and neuronal transmission. The protein is Long neurotoxin 3FTx-Oxy1 of Oxyuranus microlepidotus (Inland taipan).